The following is a 339-amino-acid chain: Anthranilate phosphoribosyltransferase (339 aa).

5-phospho-alpha-D-ribose 1-diphosphate-binding positions include glycine 79, 82-83 (GD), serine 87, 89-92 (NIST), 107-115 (KHGNRSVSS), and serine 119. Anthranilate is bound at residue glycine 79. Residue serine 91 participates in Mg(2+) binding. An anthranilate-binding site is contributed by asparagine 110. Arginine 165 is an anthranilate binding site. Mg(2+) is bound by residues aspartate 224 and glutamate 225.

It belongs to the anthranilate phosphoribosyltransferase family. In terms of assembly, homodimer. Mg(2+) is required as a cofactor.

It catalyses the reaction N-(5-phospho-beta-D-ribosyl)anthranilate + diphosphate = 5-phospho-alpha-D-ribose 1-diphosphate + anthranilate. It functions in the pathway amino-acid biosynthesis; L-tryptophan biosynthesis; L-tryptophan from chorismate: step 2/5. Catalyzes the transfer of the phosphoribosyl group of 5-phosphorylribose-1-pyrophosphate (PRPP) to anthranilate to yield N-(5'-phosphoribosyl)-anthranilate (PRA). In Exiguobacterium sibiricum (strain DSM 17290 / CCUG 55495 / CIP 109462 / JCM 13490 / 255-15), this protein is Anthranilate phosphoribosyltransferase.